A 126-amino-acid polypeptide reads, in one-letter code: Integrin alpha-M (126 aa).

Residues Asn25, Asn78, and Asn106 are each glycosylated (N-linked (GlcNAc...) asparagine).

The protein belongs to the integrin alpha chain family. Heterodimer of an alpha and a beta chain. ITGAM associates with ITGB2. Found in a complex with CD177 and ITGB2/CD18. Interacts with JAM3. Interacts with THBD. Interacts with TMEM268; this interaction inhibits ITGAM degradation via the endosome-lysosome pathway.

It is found in the cell membrane. The protein resides in the membrane raft. Its function is as follows. Integrin ITGAM/ITGB2 is implicated in various adhesive interactions of monocytes, macrophages and granulocytes as well as in mediating the uptake of complement-coated particles. It is identical with CR-3, the receptor for the iC3b fragment of the third complement component. It probably recognizes the R-G-D peptide in C3b. Integrin ITGAM/ITGB2 is also a receptor for fibrinogen, factor X and ICAM1. It recognizes P1 and P2 peptides of fibrinogen gamma chain. Regulates neutrophil migration. In association with beta subunit ITGB2/CD18, required for CD177-PRTN3-mediated activation of TNF primed neutrophils. May regulate phagocytosis-induced apoptosis in extravasated neutrophils. May play a role in mast cell development. Required with TYROBP/DAP12 in microglia to control production of microglial superoxide ions which promote the neuronal apoptosis that occurs during brain development. The protein is Integrin alpha-M (ITGAM) of Cavia porcellus (Guinea pig).